Here is an 82-residue protein sequence, read N- to C-terminus: Small ribosomal subunit protein bTHXm (82 aa).

The N-terminal 22 residues, 1-22, are a transit peptide targeting the mitochondrion; it reads MAMRLAAAAAFVRRLVPARNPV. Residues 34–56 form a disordered region; sequence RGDKKTKRGKRFKGSYGNARPKR. Residues 37–46 show a composition bias toward basic residues; that stretch reads KKTKRGKRFK.

Belongs to the bacterial ribosomal protein bTHX family.

It localises to the mitochondrion. The chain is Small ribosomal subunit protein bTHXm from Oryza sativa subsp. japonica (Rice).